The sequence spans 602 residues: MSVDSSSTHRRRCVAARLVRLAAAGAAVTVAVGTAAAWAHAGALQHRCVHDAMQARVRQSVADHHKAPGAVSAVGLPYVTLDAAHTAAAADPRPGSARSVVRDVNWGALRIAVSTEDLTDPAYHCARVGQHVKDHAGAIVTCTAEDILTNEKRDILVKHLIPQAVQLHTERLKVQQVQGKWKVTDMVGDICGDFKVPQAHITEGFSNTDFVMYVASVPSEEGVLAWATTCQTFSDGHPAVGVINIPAANIASRYDQLVTRVVTHEMAHALGFSGPFFEDARIVANVPNVRGKNFDVPVINSSTAVAKAREQYGCDTLEYLEVEDQGGAGSAGSHIKMRNAQDELMAPAAAAGYYTALTMAIFQDLGFYQADFSKAEVMPWGQNAGCAFLTNKCMEQSVTQWPAMFCNESEDAIRCPTSRLSLGACGVTRHPGLPPYWQYFTDPSLAGVSAFMDYCPVVVPYSDGSCTQRASEAHASLLPFNVFSDAARCIDGAFRPKATDGIVKSYAGLCANVQCDTATRTYSVQVHGSNDYTNCTPGLRVELSTVSNAFEGGGYITCPPYVEVCQGNVQAAKDGGNTAAGRRGPRAAATALLVAALLAVAL.

A signal peptide spans 1–39 (MSVDSSSTHRRRCVAARLVRLAAAGAAVTVAVGTAAAWA). Positions 40 to 100 (HAGALQHRCV…DPRPGSARSV (61 aa)) are cleaved as a propeptide — activation peptide. Cystine bridges form between C125-C142 and C191-C230. H264 contributes to the Zn(2+) binding site. The active site involves E265. H268 serves as a coordination point for Zn(2+). N300 carries an N-linked (GlcNAc...) asparagine glycan. Disulfide bonds link C314/C386, C393/C455, C406/C425, C415/C489, C466/C510, C515/C565, and C535/C558. H334 is a binding site for Zn(2+). N407 is a glycosylation site (N-linked (GlcNAc...) asparagine). N534 carries N-linked (GlcNAc...) asparagine glycosylation. The GPI-anchor amidated asparagine moiety is linked to residue N577. Positions 578 to 602 (TAAGRRGPRAAATALLVAALLAVAL) are cleaved as a propeptide — removed in mature form.

The protein belongs to the peptidase M8 family. It depends on Zn(2+) as a cofactor. The phosphatidylinositol moiety of the GPI-anchor contains a fully saturated, unbranched 1-O-alkyl chain (mainly C24:0) and a mixture of fully saturated unbranched 2-O-acyl chains (C12:0, C14:0, C16:0, and C18:0).

It localises to the cell membrane. It catalyses the reaction Preference for hydrophobic residues at P1 and P1' and basic residues at P2' and P3'. A model nonapeptide is cleaved at -Ala-Tyr-|-Leu-Lys-Lys-.. Its function is as follows. Has an integral role during the infection of macrophages in the mammalian host. In Leishmania major, this protein is Leishmanolysin (gp63).